The sequence spans 256 residues: Probable succinate transporter subunit YjjP (256 aa).

Residues 1-113 (MQTEQQRAVT…KRFSQIQPLR (113 aa)) lie on the Cytoplasmic side of the membrane. The chain crosses the membrane as a helical span at residues 114–135 (YPRWLVALMVGLSCACFCKLNN). The Periplasmic portion of the chain corresponds to 136 to 140 (GGWDG). The chain crosses the membrane as a helical span at residues 141–158 (AVITFFASTTAMYIRQLL). The Cytoplasmic segment spans residues 159–168 (AQRHLHPQIN). A helical transmembrane segment spans residues 169 to 189 (FCLTAFAATTISGLLLQLPTF). Residues 190 to 194 (SNTPT) are Periplasmic-facing. The helical transmembrane segment at 195 to 215 (IAMAASVLLLVPGFPLINAVA) threads the bilayer. Over 216–228 (DMFKGHINTGLAR) the chain is Cytoplasmic. The helical transmembrane segment at 229-249 (WAIASLLTLATCVGVVMALTI) threads the bilayer. Topologically, residues 250-256 (WGLRGWV) are periplasmic.

This sequence belongs to the ThrE exporter (TC 2.A.79) family. In terms of assembly, the transporter is composed of YjjB and YjjP.

The protein localises to the cell inner membrane. Its function is as follows. Involved in succinate export with YjjB. Both proteins are required for export. Contributes to succinate production under both aerobic and anaerobic conditions. The chain is Probable succinate transporter subunit YjjP (yjjP) from Escherichia coli (strain K12).